Consider the following 201-residue polypeptide: Diadenylate cyclase CdaS (201 aa).

Positions 54–201 (QTLAATYYIQ…LNGILYTISL (148 aa)) constitute a DAC domain.

It belongs to the adenylate cyclase family. DacB/CdaS subfamily. Probably forms a homohexamer. The cofactor is Mg(2+).

The catalysed reaction is 2 ATP = 3',3'-c-di-AMP + 2 diphosphate. Functionally, one of 3 paralogous diadenylate cyclases (DAC) in this bacteria catalyzing the condensation of 2 ATP molecules into cyclic di-AMP (c-di-AMP). It has slow DAC activity with ADP as a substrate and may have weak ADPase activity. Required for efficient spore formation, whereas in B.subtilis, it is required for efficient spore germination. It is produced under the control of different sigma factors in the two bacteria. It is also required for parasporal crystal formation. The protein is Diadenylate cyclase CdaS of Bacillus thuringiensis (strain BMB171).